Consider the following 219-residue polypeptide: Probable GTP-binding protein EngB (219 aa).

An EngB-type G domain is found at 24–207 (VQPEIAFAGR…HELIESWLRP (184 aa)). Residues 32-39 (GRSNAGKS), 59-63 (GRTQH), 81-84 (DLPG), 148-151 (TKCD), and 186-188 (FSA) each bind GTP. The Mg(2+) site is built by Ser-39 and Thr-61.

Belongs to the TRAFAC class TrmE-Era-EngA-EngB-Septin-like GTPase superfamily. EngB GTPase family. It depends on Mg(2+) as a cofactor.

Its function is as follows. Necessary for normal cell division and for the maintenance of normal septation. This Burkholderia ambifaria (strain ATCC BAA-244 / DSM 16087 / CCUG 44356 / LMG 19182 / AMMD) (Burkholderia cepacia (strain AMMD)) protein is Probable GTP-binding protein EngB.